The primary structure comprises 351 residues: MNGTEGPFFYIPMVNTTGIVRSPYEYPQYYLVNPAAYAILGAYMFFLIIVGFPVNFMTLYVTLEHKKLRTPLNYILLNLAVADLFMVIGGFTTTMYTSMHGYFVLGRLGCNLEGFFATLGGMISLWSLAVLAIERWVVVCKPISNFRFGENHAIMGVSLTWGMALACTVPPLVGWSRYIPEGMQCSCGIDYYTRAEGFNNESFVLYMFFCHFTIPLTIIFFCYGRLLCAVKEAAAAQQESETTQRAEREVTRMVIIMVIGFLVCWLPYASVAWFIFTHQGSEFGPLFMTIPAFFAKSSSIYNPMIYICMNKQFRHCMITTLFCGKNPFEGEEEGASSTKTEASSASSVSPA.

The Extracellular segment spans residues 1–36 (MNGTEGPFFYIPMVNTTGIVRSPYEYPQYYLVNPAA). 2 N-linked (GlcNAc...) asparagine glycosylation sites follow: N2 and N15. A helical transmembrane segment spans residues 37–61 (YAILGAYMFFLIIVGFPVNFMTLYV). Residues 62–73 (TLEHKKLRTPLN) lie on the Cytoplasmic side of the membrane. Residues 74–96 (YILLNLAVADLFMVIGGFTTTMY) traverse the membrane as a helical segment. At 97-110 (TSMHGYFVLGRLGC) the chain is on the extracellular side. The cysteines at positions 110 and 187 are disulfide-linked. Residues 111–133 (NLEGFFATLGGMISLWSLAVLAI) traverse the membrane as a helical segment. Positions 134-136 (ERW) match the 'Ionic lock' involved in activated form stabilization motif. Residues 134 to 152 (ERWVVVCKPISNFRFGENH) lie on the Cytoplasmic side of the membrane. Residues 153–173 (AIMGVSLTWGMALACTVPPLV) traverse the membrane as a helical segment. Over 174–202 (GWSRYIPEGMQCSCGIDYYTRAEGFNNES) the chain is Extracellular. An N-linked (GlcNAc...) asparagine glycan is attached at N200. Residues 203–224 (FVLYMFFCHFTIPLTIIFFCYG) form a helical membrane-spanning segment. Topologically, residues 225-252 (RLLCAVKEAAAAQQESETTQRAEREVTR) are cytoplasmic. A helical membrane pass occupies residues 253-274 (MVIIMVIGFLVCWLPYASVAWF). Residues 275 to 286 (IFTHQGSEFGPL) lie on the Extracellular side of the membrane. Residues 287 to 308 (FMTIPAFFAKSSSIYNPMIYIC) form a helical membrane-spanning segment. At K296 the chain carries N6-(retinylidene)lysine. Residues 309-351 (MNKQFRHCMITTLFCGKNPFEGEEEGASSTKTEASSASSVSPA) are Cytoplasmic-facing. Residue C323 is the site of S-palmitoyl cysteine attachment. A disordered region spans residues 330–351 (GEEEGASSTKTEASSASSVSPA). A compositionally biased stretch (low complexity) spans 335–351 (ASSTKTEASSASSVSPA).

The protein belongs to the G-protein coupled receptor 1 family. Opsin subfamily. In terms of processing, phosphorylated on some or all of the serine and threonine residues present in the C-terminal region. Post-translationally, contains one covalently linked retinal chromophore.

It localises to the membrane. The protein resides in the cell projection. Its subcellular location is the cilium. It is found in the photoreceptor outer segment. In terms of biological role, photoreceptor required for image-forming vision at low light intensity. While most salt water fish species use retinal as chromophore, most freshwater fish use 3-dehydroretinal, or a mixture of retinal and 3-dehydroretinal. Light-induced isomerization of 11-cis to all-trans retinal triggers a conformational change that activates signaling via G-proteins. Subsequent receptor phosphorylation mediates displacement of the bound G-protein alpha subunit by arrestin and terminates signaling. The protein is Rhodopsin (rho) of Sargocentron diadema (Crown squirrelfish).